The primary structure comprises 330 residues: Clavaminate synthase-like protein At3g21360 (330 aa).

An N-acetylalanine modification is found at Ala-2. Residues His-120, Glu-122, and His-313 each contribute to the Fe cation site.

It depends on Fe cation as a cofactor.

The sequence is that of Clavaminate synthase-like protein At3g21360 from Arabidopsis thaliana (Mouse-ear cress).